The following is a 711-amino-acid chain: DNA topoisomerase 3 (711 aa).

Positions Lys2 to Thr135 constitute a Toprim domain. Mg(2+)-binding residues include Glu8 and Asp104. Positions Tyr152–Val580 constitute a Topo IA-type catalytic domain. The segment at Ser186–Gln191 is interaction with DNA. Catalysis depends on Tyr305, which acts as the O-(5'-phospho-DNA)-tyrosine intermediate. Residues Met691–Leu711 form a disordered region.

It belongs to the type IA topoisomerase family. Requires Mg(2+) as cofactor.

The enzyme catalyses ATP-independent breakage of single-stranded DNA, followed by passage and rejoining.. In terms of biological role, releases the supercoiling and torsional tension of DNA, which is introduced during the DNA replication and transcription, by transiently cleaving and rejoining one strand of the DNA duplex. Introduces a single-strand break via transesterification at a target site in duplex DNA. The scissile phosphodiester is attacked by the catalytic tyrosine of the enzyme, resulting in the formation of a DNA-(5'-phosphotyrosyl)-enzyme intermediate and the expulsion of a 3'-OH DNA strand. The free DNA strand then undergoes passage around the unbroken strand, thus removing DNA supercoils. Finally, in the religation step, the DNA 3'-OH attacks the covalent intermediate to expel the active-site tyrosine and restore the DNA phosphodiester backbone. This is DNA topoisomerase 3 from Staphylococcus aureus (strain Mu50 / ATCC 700699).